Consider the following 395-residue polypeptide: ATP-dependent RNA helicase eIF4A (395 aa).

An N-acetylserine modification is found at serine 2. Positions 22-50 (YKFDDMELDENLLRGVFGYGFEEPSAIQQ) match the Q motif motif. The region spanning 53–222 (IMPIIEGHDV…TKFMRNPVRI (170 aa)) is the Helicase ATP-binding domain. 66–73 (AQSGTGKT) lines the ATP pocket. Threonine 73 is subject to Phosphothreonine. A phosphoserine mark is found at serine 77 and serine 129. Threonine 146 carries the phosphothreonine modification. Positions 170 to 173 (DEAD) match the DEAD box motif. Positions 233-394 (GIKQFYVNVE…ELPSDIATLL (162 aa)) constitute a Helicase C-terminal domain.

Belongs to the DEAD box helicase family. eIF4A subfamily. In terms of assembly, component of the eIF4F complex, which composition varies with external and internal environmental conditions. It is composed of at least eIF4A, eIF4E and eIF4G.

Its subcellular location is the cytoplasm. It catalyses the reaction ATP + H2O = ADP + phosphate + H(+). Functionally, ATP-dependent RNA helicase which is a subunit of the eIF4F complex involved in cap recognition and is required for mRNA binding to ribosome. In the current model of translation initiation, eIF4A unwinds RNA secondary structures in the 5'-UTR of mRNAs which is necessary to allow efficient binding of the small ribosomal subunit, and subsequent scanning for the initiator codon. This is ATP-dependent RNA helicase eIF4A (TIF1) from Saccharomyces cerevisiae (strain YJM789) (Baker's yeast).